The following is a 315-amino-acid chain: Lamassu protein LmuA (315 aa).

Its function is as follows. Component of antiviral defense system Lamassu type I, composed of LmuA and LmuB. Expression of Lamassu type I in B.subtilis (strain BEST7003) confers resistance to phages phi3T, SpBeta and SPR. This chain is Lamassu protein LmuA, found in Bacillus sp. (strain NCIM 5461 / CCTCC AB 2011126 / NIO-1130).